The chain runs to 180 residues: Large ribosomal subunit protein uL6 (180 aa).

The protein belongs to the universal ribosomal protein uL6 family. Part of the 50S ribosomal subunit.

This protein binds to the 23S rRNA, and is important in its secondary structure. It is located near the subunit interface in the base of the L7/L12 stalk, and near the tRNA binding site of the peptidyltransferase center. In Picosynechococcus sp. (strain ATCC 27264 / PCC 7002 / PR-6) (Agmenellum quadruplicatum), this protein is Large ribosomal subunit protein uL6.